Consider the following 1029-residue polypeptide: Protein phosphatase 1 regulatory subunit 12A (1029 aa).

The KVKF motif signature appears at 35-38 (KVKF). 6 ANK repeats span residues 39–68 (DDGA…DINY), 72–101 (DGLT…NINQ), 105–134 (EGWI…HVGA), 138–164 (EGDT…RQGV), 198–227 (SGGT…DVNI), and 231–260 (DGWT…DMET). (3S)-3-hydroxyasparagine; by HIF1AN occurs at positions 67 and 100. Residue Asn226 is modified to (3S)-3-hydroxyasparagine; by HIF1AN. A disordered region spans residues 290–786 (LHSEKRDKKS…APSSSSLSTL (497 aa)). A compositionally biased stretch (basic and acidic residues) spans 291-300 (HSEKRDKKSP). Phosphoserine is present on Ser299. Residues 302 to 314 (IESTANMENNQPQ) show a composition bias toward polar residues. Over residues 318–353 (KNKETLIIEPEKNASRIESLEHEKADEEEEGKKDES) the composition is skewed to basic and acidic residues. A compositionally biased stretch (acidic residues) spans 357 to 369 (SEEDEEDDSESEA). Over residues 385-402 (TSSTQAAPAAVTAPTLSS) the composition is skewed to low complexity. Phosphoserine is present on residues Ser422 and Ser432. The segment covering 422–432 (SPKEEERKDES) has biased composition (basic and acidic residues). Thr443 is modified (phosphothreonine). A Phosphoserine; by NUAK1 modification is found at Ser445. Tyr446 carries the phosphotyrosine modification. Residues 469-480 (RSASSPRLSSSL) show a composition bias toward low complexity. A Phosphoserine; by NUAK1 modification is found at Ser472. Ser473 carries the post-translational modification Phosphoserine; by CDK1. Position 477 is a phosphoserine (Ser477). Over residues 481-491 (DNKEKEKDNKG) the composition is skewed to basic and acidic residues. Ser507 and Ser509 each carry phosphoserine. The segment covering 540–551 (NSSINEGSTYHR) has biased composition (polar residues). Residues 564 to 578 (SCSVPSTTSTPTVTS) show a composition bias toward low complexity. Residues 585-594 (SLPSSTSTAA) are compositionally biased toward polar residues. A compositionally biased stretch (low complexity) spans 596 to 610 (TPPGSSSAGTQSSTS). Residues Ser601 and Ser618 each carry the phosphoserine modification. A compositionally biased stretch (basic and acidic residues) spans 614–625 (WAEDSTEKEKDS). Over residues 626-656 (APTAVTIPVAPTVVNAAAPSTTTLTTTTAGT) the composition is skewed to low complexity. A compositionally biased stretch (basic and acidic residues) spans 671 to 680 (VRDEESESQR). The interaction with ROCK2 stretch occupies residues 680–863 (RKARSRQARQ…VSFWTQDSDE (184 aa)). Positions 681-691 (KARSRQARQSR) are enriched in basic residues. Phosphoserine; by PKA and PKG; in vitro occurs at positions 690 and 693. Thr694 bears the Phosphothreonine; by ROCK1, ROCK2, CDC42BP, ZIPK/DAPK3 and RAF1 mark. Basic and acidic residues predominate over residues 716 to 765 (RTREQENEEKEKEEKEKQDKEKQEEKKESEASREDEYKQKYSRTYDETYT). Residues 771–786 (STSSSSAPSSSSLSTL) show a composition bias toward low complexity. Ser801 is modified (phosphoserine). The interval 808–927 (AYSRGLAKEN…PYSSRLEKDD (120 aa)) is disordered. The span at 813–839 (LAKENEREGEKKEEEKEGEDKSQPKSI) shows a compositional bias: basic and acidic residues. The span at 840–851 (RERRRPREKRRS) shows a compositional bias: basic residues. Position 851 is a phosphoserine; by ROCK2 (Ser851). A phosphoserine mark is found at Ser861 and Ser870. Residues 866 to 882 (QERQSDTEDGSSKRETQ) are compositionally biased toward basic and acidic residues. Over residues 883 to 897 (TDSVSRYDSSSTSSS) the composition is skewed to low complexity. A phosphoserine mark is found at Ser902 and Ser907. Phosphoserine; by NUAK1 is present on Ser909. The segment covering 913 to 927 (LEDRKPYSSRLEKDD) has biased composition (basic and acidic residues). Position 994 is a phosphoserine (Ser994).

As to quaternary structure, PP1 comprises a catalytic subunit, PPP1CA, PPP1CB or PPP1CC, and one or several targeting or regulatory subunits. PPP1R12A mediates binding to myosin. Interacts with ARHA and CIT. Binds PPP1R12B, ROCK1 and IL16. Interacts directly with PRKG1. Non-covalent dimer of 2 dimers; PRKG1-PRKG1 and PPP1R12A-PPP1R12A. Interacts with SMTNL1. Interacts with PPP1CB; the interaction is direct. Interacts (when phosphorylated at Ser-445, Ser-472 and Ser-910) with 14-3-3. Interacts with ROCK1 and ROCK2. Interacts with isoform 1 and isoform 2 of ZIPK/DAPK3. Interacts with RAF1. Interacts with HIF1AN. Interacts with NCKAP1L. In terms of processing, phosphorylated by CIT (Rho-associated kinase). Phosphorylated cooperatively by ROCK1 and CDC42BP on Thr-694. Phosphorylated on upon DNA damage, probably by ATM or ATR. In vitro, phosphorylation of Ser-693 by PKA and PKG appears to prevent phosphorylation of the inhibitory site Thr-694, probably mediated by PRKG1. Phosphorylation at Ser-445, Ser-472 and Ser-909 by NUAK1 promotes interaction with 14-3-3, leading to inhibit interaction with myosin light chain MLC2, preventing dephosphorylation of MLC2. May be phosphorylated at Thr-694 by DMPK; may inhibit the myosin phosphatase activity. Phosphorylated at Ser-473 by CDK1 during mitosis, creating docking sites for the POLO box domains of PLK1. Subsequently, PLK1 binds and phosphorylates PPP1R12A. As to expression, expressed in striated and vascular smooth muscle, specificcally in type 2a fibers (at protein level). Expression levels are 20-30% higher in developed males than females (at protein level).

It localises to the cytoplasm. It is found in the cytoskeleton. The protein resides in the stress fiber. Functionally, key regulator of protein phosphatase 1C (PPP1C). Mediates binding to myosin. As part of the PPP1C complex, involved in dephosphorylation of PLK1. Capable of inhibiting HIF1AN-dependent suppression of HIF1A activity. This Mus musculus (Mouse) protein is Protein phosphatase 1 regulatory subunit 12A.